The sequence spans 147 residues: Deoxyuridine 5'-triphosphate nucleotidohydrolase (147 aa).

Substrate contacts are provided by residues 67-69 (RSG), N80, and 84-86 (TID).

The protein belongs to the dUTPase family. The cofactor is Mg(2+).

The catalysed reaction is dUTP + H2O = dUMP + diphosphate + H(+). Its pathway is pyrimidine metabolism; dUMP biosynthesis; dUMP from dCTP (dUTP route): step 2/2. This enzyme is involved in nucleotide metabolism: it produces dUMP, the immediate precursor of thymidine nucleotides and it decreases the intracellular concentration of dUTP so that uracil cannot be incorporated into DNA. In Syntrophotalea carbinolica (strain DSM 2380 / NBRC 103641 / GraBd1) (Pelobacter carbinolicus), this protein is Deoxyuridine 5'-triphosphate nucleotidohydrolase.